We begin with the raw amino-acid sequence, 181 residues long: Oligoribonuclease (181 aa).

The Exonuclease domain occupies 8–171 (LIWVDLEMTG…DDIRESIAEL (164 aa)). Tyrosine 129 is an active-site residue.

This sequence belongs to the oligoribonuclease family.

It is found in the cytoplasm. Functionally, 3'-to-5' exoribonuclease specific for small oligoribonucleotides. This chain is Oligoribonuclease, found in Vibrio parahaemolyticus serotype O3:K6 (strain RIMD 2210633).